The sequence spans 167 residues: MRIGYGFDIHAFGSIKPLIIGGVQIPYNKGLIAHSNGDLLIHSLIDALLGATAMGDIGTFFPSEDKKYKNINSRILLKYIWKRIYLKNYRISNIDITIITETPKILSYIFLMRSNIASDLNIKIEKISVKSTSSKMIGCIGRKEGIACQSLVMLVKSKNTDRKNNII.

The a divalent metal cation site is built by Asp-8 and His-10. Residues 8-10 (DIH) and 34-35 (HS) each bind 4-CDP-2-C-methyl-D-erythritol 2-phosphate. An a divalent metal cation-binding site is contributed by His-42. Residues 56-58 (DIG) and Arg-142 contribute to the 4-CDP-2-C-methyl-D-erythritol 2-phosphate site.

The protein belongs to the IspF family. As to quaternary structure, homotrimer. Requires a divalent metal cation as cofactor.

The enzyme catalyses 4-CDP-2-C-methyl-D-erythritol 2-phosphate = 2-C-methyl-D-erythritol 2,4-cyclic diphosphate + CMP. It functions in the pathway isoprenoid biosynthesis; isopentenyl diphosphate biosynthesis via DXP pathway; isopentenyl diphosphate from 1-deoxy-D-xylulose 5-phosphate: step 4/6. Functionally, involved in the biosynthesis of isopentenyl diphosphate (IPP) and dimethylallyl diphosphate (DMAPP), two major building blocks of isoprenoid compounds. Catalyzes the conversion of 4-diphosphocytidyl-2-C-methyl-D-erythritol 2-phosphate (CDP-ME2P) to 2-C-methyl-D-erythritol 2,4-cyclodiphosphate (ME-CPP) with a corresponding release of cytidine 5-monophosphate (CMP). This chain is 2-C-methyl-D-erythritol 2,4-cyclodiphosphate synthase, found in Buchnera aphidicola subsp. Schizaphis graminum (strain Sg).